The following is a 763-amino-acid chain: MSELLSVALFLASVLIYAWKAGRNTWWFAATLTVLGLFVILNITLYASDYFTGDGINDAVLYTLTNSLTGAGVGKYILPGIGIALALVAVFGALGWILRRRRHHPHHVGYSLLALLLALGSVDASPAFRQITELVKSQMRDGDPDFAVYYKEPAKTIPHPKLNLVYIYGESLERTYFDNDAFPNLTPELGALKNEGLDFSHTMQLPGTDYTIAGMVASQCGIPLFAPFEGNASASVSSFFPQNICLGDILKNSGYQNYFVQGANLRFAGKDVFLKSHGFDHLYGAEELKTVVADPSYRNDWGFYDDTVLDEAWKKFEALSRSGQRFSLFTLTVDTHHPDGFISRTCNRKRYDYDGKPNQSFSAVSCSQENIAEFINKIKASPWFKDTVIVVSSDHLAMNNTAWKYLNKQDRNNLFFILRGDKPQQETLAVKRNTMDNGATVLDILGGDNFIGLGRSSLSGQSLSEVFLNVKEKVLAMKPDIIRLWNFPKEIKDFTVDRDKNMIAFSGSHFRLPLLLRVSDKRVEPLPESEYSAPLRFQLADFAPRDNFVWIDRCYKMAQLWAPALALSTDWCVSQGQLGGQQTVQHVDKAQWQGKTAFKDTMIDMERYKGNVDTLKIVDNDIRYKADSFIFNVAGAPEEVKQFSGISRPESWGRWSNAQLGDEVKIEYKAPLPKKFDLVITAKAFGDNANRPIPVRVGNEEQTLVLGHDVSTITLHFNNPTDANTLVIAPPAPVSTNEGNILGHSPRKLGIGMVEIKVVNVEG.

Helical transmembrane passes span 1–21 (MSEL…AWKA), 26–46 (WWFA…ITLY), 77–97 (ILPG…LGWI), and 108–128 (VGYS…SPAF).

The protein belongs to the OpgB family.

It localises to the cell inner membrane. It catalyses the reaction a phosphatidylglycerol + a membrane-derived-oligosaccharide D-glucose = a 1,2-diacyl-sn-glycerol + a membrane-derived-oligosaccharide 6-(glycerophospho)-D-glucose.. It functions in the pathway glycan metabolism; osmoregulated periplasmic glucan (OPG) biosynthesis. Functionally, transfers a phosphoglycerol residue from phosphatidylglycerol to the membrane-bound nascent glucan backbones. In Salmonella agona (strain SL483), this protein is Phosphoglycerol transferase I.